We begin with the raw amino-acid sequence, 873 residues long: Leucine--tRNA ligase (873 aa).

The 'HIGH' region motif lies at 42-52 (PYPSGKLHMGH). The interval 624-643 (PVEIGGTEKMSKSKNNGVDP) is disordered. Positions 632–636 (KMSKS) match the 'KMSKS' region motif. Residue Lys635 participates in ATP binding.

The protein belongs to the class-I aminoacyl-tRNA synthetase family.

The protein resides in the cytoplasm. It catalyses the reaction tRNA(Leu) + L-leucine + ATP = L-leucyl-tRNA(Leu) + AMP + diphosphate. This chain is Leucine--tRNA ligase, found in Pseudomonas aeruginosa (strain LESB58).